The primary structure comprises 846 residues: MAP7 domain-containing protein 1 (846 aa).

Disordered regions lie at residues methionine 1–lysine 153 and glutamate 186–lysine 210. Pro residues predominate over residues glutamate 24–proline 41. Residues threonine 49 and threonine 53 each carry the phosphothreonine modification. Serine 95 carries the phosphoserine modification. At threonine 99 the chain carries Phosphothreonine. Residues arginine 113 to proline 123 show a composition bias toward low complexity. Phosphoserine is present on residues serine 115 and serine 118. The residue at position 120 (threonine 120) is a Phosphothreonine. Serine 125 and serine 127 each carry phosphoserine. The stretch at alanine 130–threonine 224 forms a coiled coil. The span at glutamine 132–lysine 153 shows a compositional bias: basic and acidic residues. Serine 256, serine 275, serine 315, serine 368, and serine 401 each carry phosphoserine. Residues threonine 318 to glycine 816 form a disordered region. Residues arginine 407–arginine 437 show a composition bias toward basic and acidic residues. Residues valine 414 to glutamine 443 are a coiled coil. A phosphoserine mark is found at serine 444, serine 448, serine 454, and serine 460. The segment covering serine 460 to serine 471 has biased composition (low complexity). A Glycyl lysine isopeptide (Lys-Gly) (interchain with G-Cter in SUMO2) cross-link involves residue lysine 462. 2 positions are modified to phosphoserine: serine 479 and serine 496. Residues serine 479–proline 497 show a composition bias toward pro residues. Residues proline 523–proline 539 show a composition bias toward basic and acidic residues. Residues proline 542–alanine 556 are compositionally biased toward pro residues. Serine 544, serine 548, and serine 552 each carry phosphoserine. Threonine 554 carries the post-translational modification Phosphothreonine. Over residues proline 568–alanine 579 the composition is skewed to low complexity. Residues threonine 599–glutamate 740 adopt a coiled-coil conformation. Over residues threonine 600–glutamate 740 the composition is skewed to basic and acidic residues. A Phosphothreonine modification is found at threonine 818.

It belongs to the MAP7 family.

It localises to the cytoplasm. The protein localises to the cytoskeleton. It is found in the spindle. Its subcellular location is the microtubule organizing center. The protein resides in the centrosome. It localises to the midbody. Functionally, microtubule-stabilizing protein involved in the control of cell motility and neurite outgrowth. Facilitate microtubule stabilization through the maintenance of acetylated stable microtubules. The polypeptide is MAP7 domain-containing protein 1 (Map7d1) (Mus musculus (Mouse)).